Consider the following 400-residue polypeptide: tRNA(Ile)-lysidine synthase (400 aa).

25–30 is a binding site for ATP; sequence SGGVDS.

Belongs to the tRNA(Ile)-lysidine synthase family.

It localises to the cytoplasm. The enzyme catalyses cytidine(34) in tRNA(Ile2) + L-lysine + ATP = lysidine(34) in tRNA(Ile2) + AMP + diphosphate + H(+). In terms of biological role, ligates lysine onto the cytidine present at position 34 of the AUA codon-specific tRNA(Ile) that contains the anticodon CAU, in an ATP-dependent manner. Cytidine is converted to lysidine, thus changing the amino acid specificity of the tRNA from methionine to isoleucine. This Francisella philomiragia subsp. philomiragia (strain ATCC 25017 / CCUG 19701 / FSC 153 / O#319-036) protein is tRNA(Ile)-lysidine synthase.